The sequence spans 1624 residues: NAD-specific glutamate dehydrogenase (1624 aa).

The active site involves K845.

Belongs to the Glu/Leu/Phe/Val dehydrogenases family. As to quaternary structure, interacts with (unphosphorylated) GarA.

The catalysed reaction is L-glutamate + NAD(+) + H2O = 2-oxoglutarate + NH4(+) + NADH + H(+). With respect to regulation, activity is inhibited by unphosphorylated GarA. Functionally, catalyzes the reversible conversion of L-glutamate to 2-oxoglutarate. In Mycobacterium tuberculosis (strain ATCC 25618 / H37Rv), this protein is NAD-specific glutamate dehydrogenase (gdh).